A 547-amino-acid chain; its full sequence is Chaperonin GroEL (547 aa).

ATP contacts are provided by residues 30–33 (TLGP), Lys51, 87–91 (DGTTT), Gly415, and Asp496. The tract at residues 527–547 (SDKAEPMPMRGGMGGMGGMDF) is disordered. The segment covering 537-547 (GGMGGMGGMDF) has biased composition (gly residues).

It belongs to the chaperonin (HSP60) family. As to quaternary structure, forms a cylinder of 14 subunits composed of two heptameric rings stacked back-to-back. Interacts with the co-chaperonin GroES.

It localises to the cytoplasm. The catalysed reaction is ATP + H2O + a folded polypeptide = ADP + phosphate + an unfolded polypeptide.. Functionally, together with its co-chaperonin GroES, plays an essential role in assisting protein folding. The GroEL-GroES system forms a nano-cage that allows encapsulation of the non-native substrate proteins and provides a physical environment optimized to promote and accelerate protein folding. The polypeptide is Chaperonin GroEL (Rickettsia africae (strain ESF-5)).